Consider the following 650-residue polypeptide: Phosphatidylinositol 4-kinase gamma 7 (650 aa).

Positions 46–103 constitute a Ubiquitin-like; degenerate domain; sequence RRVFVQTETGCVLGMELDRSDNVHTVKRRLQIALNFPTEESSLTYGDMVLTNDLSAVR. Positions 166–463 constitute a PI3K/PI4K catalytic domain; the sequence is GVEPLPVHSG…SVTERDVFSP (298 aa). Residues 172–178 form a G-loop region; sequence VHSGLGG. Residues 173–179, K194, and 283–286 each bind ATP; these read HSGLGGA and QKFV. Positions 316 to 324 are catalytic loop; sequence FNTDRHGGN. Residues 343 to 369 are activation loop; it reads PIDHGLCLPETLEDPYFEWIHWPQASL. D345 is an ATP binding site. Disordered regions lie at residues 508–534 and 560–595; these read SLGK…ENTV and STSM…KSAN. Residues 516–529 are compositionally biased toward acidic residues; sequence IKEEEEDEEEEEDK. Polar residues-rich tracts occupy residues 560 to 569 and 585 to 595; these read STSMKNTHLS and ENTSSGHKSAN. S593 bears the Phosphoserine mark.

The protein belongs to the PI3/PI4-kinase family. Type II PI4K subfamily.

It catalyses the reaction a 1,2-diacyl-sn-glycero-3-phospho-(1D-myo-inositol) + ATP = a 1,2-diacyl-sn-glycero-3-phospho-(1D-myo-inositol 4-phosphate) + ADP + H(+). In terms of biological role, the phosphorylation of phosphatidylinositol (PI) to PI4P is the first committed step in the generation of phosphatidylinositol 4,5-bisphosphate (PIP2), a precursor of the second messenger inositol 1,4,5-trisphosphate (InsP3). Undergoes autophosphorylation and phosphorylates serine/threonine residues of protein substrates. The chain is Phosphatidylinositol 4-kinase gamma 7 from Arabidopsis thaliana (Mouse-ear cress).